We begin with the raw amino-acid sequence, 316 residues long: Ornithine carbamoyltransferase (316 aa).

Carbamoyl phosphate-binding positions include 59 to 62 (STRT), Gln86, Arg110, and 137 to 140 (HPCQ). L-ornithine-binding positions include Asn168, Asp232, and 236–237 (SM). Carbamoyl phosphate is bound by residues 273 to 274 (CL) and Arg301.

Belongs to the aspartate/ornithine carbamoyltransferase superfamily. OTCase family.

Its subcellular location is the cytoplasm. The catalysed reaction is carbamoyl phosphate + L-ornithine = L-citrulline + phosphate + H(+). It participates in amino-acid biosynthesis; L-arginine biosynthesis; L-arginine from L-ornithine and carbamoyl phosphate: step 1/3. Its function is as follows. Reversibly catalyzes the transfer of the carbamoyl group from carbamoyl phosphate (CP) to the N(epsilon) atom of ornithine (ORN) to produce L-citrulline. This chain is Ornithine carbamoyltransferase (argF), found in Listeria monocytogenes serovar 1/2a (strain ATCC BAA-679 / EGD-e).